Here is a 1012-residue protein sequence, read N- to C-terminus: Putative cellulose synthase-like protein D5 (1012 aa).

The segment at 1–85 (MSGDYANYTV…APSSNKSLLV (85 aa)) is disordered. Positions 20–37 (PSGGAPPAAPSAGGARPG) are enriched in low complexity. Residues 57-69 (GGGDDGAKMDRRL) show a composition bias toward basic and acidic residues. Transmembrane regions (helical) follow at residues 150–170 (ILSPYRLLVLVRFVALFLFLV) and 180–200 (ALWLWGISIVCEFWFAFSWLL). The active site involves Asp-280. A disordered region spans residues 597–620 (PRQGSEAMPGAGGGRSGGGSVGGD). A compositionally biased stretch (gly residues) spans 606 to 618 (GAGGGRSGGGSVG). Asp-717 is an active-site residue. 6 helical membrane-spanning segments follow: residues 799–819 (LFLIMYCLLPALSLFSGQFIV), 825–845 (TFLSYLLLITITLMLLCLLEV), 871–891 (LAAVLQGLLKVVAGIEISFTL), 914–934 (SLFIPPLAVIGINIIALVVGV), 948–968 (LLGGGFFSFWVLAHYYPFAKG), and 978–998 (TIVYVWAGLISITVSLLWITI).

It belongs to the glycosyltransferase 2 family. Plant cellulose synthase-like D subfamily.

Its subcellular location is the golgi apparatus membrane. Its function is as follows. Thought to be a Golgi-localized beta-glycan synthase that polymerize the backbones of noncellulosic polysaccharides (hemicelluloses) of plant cell wall. The polypeptide is Putative cellulose synthase-like protein D5 (CSLD5) (Oryza sativa subsp. indica (Rice)).